The chain runs to 873 residues: Alanine--tRNA ligase (873 aa).

Zn(2+) is bound by residues H563, H567, C665, and H669.

The protein belongs to the class-II aminoacyl-tRNA synthetase family. It depends on Zn(2+) as a cofactor.

It localises to the cytoplasm. The enzyme catalyses tRNA(Ala) + L-alanine + ATP = L-alanyl-tRNA(Ala) + AMP + diphosphate. Its function is as follows. Catalyzes the attachment of alanine to tRNA(Ala) in a two-step reaction: alanine is first activated by ATP to form Ala-AMP and then transferred to the acceptor end of tRNA(Ala). Also edits incorrectly charged Ser-tRNA(Ala) and Gly-tRNA(Ala) via its editing domain. This chain is Alanine--tRNA ligase, found in Parabacteroides distasonis (strain ATCC 8503 / DSM 20701 / CIP 104284 / JCM 5825 / NCTC 11152).